We begin with the raw amino-acid sequence, 37 residues long: Large ribosomal subunit protein bL36c (37 aa).

Belongs to the bacterial ribosomal protein bL36 family.

Its subcellular location is the plastid. In Euglena longa (Euglenophycean alga), this protein is Large ribosomal subunit protein bL36c (rpl36).